We begin with the raw amino-acid sequence, 184 residues long: Mediator of RNA polymerase II transcription subunit 11 (184 aa).

Polar residues predominate over residues 142–152; the sequence is ATTKQETNINN. The segment at 142–184 is disordered; the sequence is ATTKQETNINNEDSEKEKQENITAIETKKESSENEDEDFDMIA. Over residues 154–173 the composition is skewed to basic and acidic residues; the sequence is DSEKEKQENITAIETKKESS. A compositionally biased stretch (acidic residues) spans 174 to 184; the sequence is ENEDEDFDMIA.

This sequence belongs to the Mediator complex subunit 11 family. Component of the Mediator complex.

Its subcellular location is the nucleus. Functionally, component of the Mediator complex, a coactivator involved in the regulated transcription of nearly all RNA polymerase II-dependent genes. Mediator functions as a bridge to convey information from gene-specific regulatory proteins to the basal RNA polymerase II transcription machinery. Mediator is recruited to promoters by direct interactions with regulatory proteins and serves as a scaffold for the assembly of a functional pre-initiation complex with RNA polymerase II and the general transcription factors. This chain is Mediator of RNA polymerase II transcription subunit 11 (MED11), found in Debaryomyces hansenii (strain ATCC 36239 / CBS 767 / BCRC 21394 / JCM 1990 / NBRC 0083 / IGC 2968) (Yeast).